The following is a 186-amino-acid chain: dCTP deaminase (186 aa).

Position 107 to 112 (107 to 112 (KSTYAR)) interacts with dCTP. Glu-133 (proton donor/acceptor) is an active-site residue. DCTP-binding residues include Gln-152, Tyr-166, and Gln-176.

This sequence belongs to the dCTP deaminase family. As to quaternary structure, homotrimer.

The catalysed reaction is dCTP + H2O + H(+) = dUTP + NH4(+). It participates in pyrimidine metabolism; dUMP biosynthesis; dUMP from dCTP (dUTP route): step 1/2. In terms of biological role, catalyzes the deamination of dCTP to dUTP. This is dCTP deaminase from Campylobacter jejuni (strain RM1221).